A 932-amino-acid polypeptide reads, in one-letter code: Protein translocase subunit SecA (932 aa).

ATP is bound by residues Q87, 105–109 (GEGKT), and D515. Zn(2+) contacts are provided by C916, C918, C927, and H928.

It belongs to the SecA family. In terms of assembly, monomer and homodimer. Part of the essential Sec protein translocation apparatus which comprises SecA, SecYEG and auxiliary proteins SecDF-YajC and YidC. Zn(2+) is required as a cofactor.

The protein resides in the cell inner membrane. It is found in the cytoplasm. The catalysed reaction is ATP + H2O + cellular proteinSide 1 = ADP + phosphate + cellular proteinSide 2.. Its function is as follows. Part of the Sec protein translocase complex. Interacts with the SecYEG preprotein conducting channel. Has a central role in coupling the hydrolysis of ATP to the transfer of proteins into and across the cell membrane, serving both as a receptor for the preprotein-SecB complex and as an ATP-driven molecular motor driving the stepwise translocation of polypeptide chains across the membrane. The chain is Protein translocase subunit SecA from Burkholderia orbicola (strain AU 1054).